The primary structure comprises 180 residues: Inner membrane-spanning protein YciB (180 aa).

5 helical membrane passes run 22-42 (IYVA…LTWL), 50-70 (MTLI…VFHN), 76-96 (WKVT…QVVL), 121-141 (AAWA…AFWL), and 149-169 (FKVF…GIYI).

Belongs to the YciB family.

It is found in the cell inner membrane. Its function is as follows. Plays a role in cell envelope biogenesis, maintenance of cell envelope integrity and membrane homeostasis. The protein is Inner membrane-spanning protein YciB of Edwardsiella ictaluri (strain 93-146).